Reading from the N-terminus, the 1514-residue chain is Neurexin-1 (1514 aa).

A signal peptide spans 1-30 (MGTALVQRGGCCLLCLSLLLLGCWAELGSG). In terms of domain architecture, Laminin G-like 1 spans 31–217 (LEFPGAEGQW…PPNSGGGSPC (187 aa)). Topologically, residues 31 to 1438 (LEFPGAEGQW…EVIRESSSTT (1408 aa)) are extracellular. 2 N-linked (GlcNAc...) asparagine glycosylation sites follow: N125 and N190. The segment at 197–221 (VDGGEVKLDDEPPNSGGGSPCEAGE) is disordered. Residues 219-256 (AGEEGEGGVCLNGGVCSVVDDQAVCDCSRTGFRGKDCS) form the EGF-like 1 domain. Disulfide bonds link C228–C243 and C245–C255. Laminin G-like domains follow at residues 283–480 (IATF…AFKC) and 487–679 (DPIT…KPSC). Ca(2+) contacts are provided by D329, L346, and M414. 5 disulfides stabilise this stretch: C444–C480, C650–C679, C687–C698, C692–C707, and C709–C719. Positions 683–720 (TAKPCLSNPCKNNGMCRDGWNRYVCDCSGTGYLGRSCE) constitute an EGF-like 2 domain. Laminin G-like domains lie at 725-898 (VLSY…IDYC) and 912-1087 (DPVT…ERGC). The Ca(2+) site is built by D772 and L789. N-linked (GlcNAc...) asparagine glycosylation occurs at N797. Position 848 (R848) interacts with Ca(2+). 5 disulfide bridges follow: C890-C898, C1059-C1087, C1094-C1105, C1099-C1114, and C1116-C1126. Residues 1090-1127 (PSTTCQEDSCSNQGVCLQQWDGFSCDCSMTSFSGPLCN) enclose the EGF-like 3 domain. Residues 1133 to 1331 (YIFSKGGGQI…DANIAIVGNV (199 aa)) form the Laminin G-like 6 domain. Ca(2+) is bound by residues D1183 and V1200. The N-linked (GlcNAc...) asparagine glycan is linked to N1230. Residues I1282 and N1284 each coordinate Ca(2+). The O-linked (Xyl...) (heparan sulfate) serine glycan is linked to S1392. Positions 1396-1427 (PSDDEDIDPCEPSSGGLANPTRVGGREPYPGS) are disordered. Residues 1439–1459 (GMVVGIVAAAALCILILLYAM) traverse the membrane as a helical segment. Topologically, residues 1460 to 1514 (YKYRNRDEGSYHVDESRNYISNSAQSNGAVVKEKQPSSAKSANKNKKNKDKEYYV) are cytoplasmic. Residues 1481-1507 (NSAQSNGAVVKEKQPSSAKSANKNKKN) form an interaction with CASK region. The interval 1481–1514 (NSAQSNGAVVKEKQPSSAKSANKNKKNKDKEYYV) is disordered.

This sequence belongs to the neurexin family. As to quaternary structure, interacts (via laminin G-like domain 2 and/or laminin G-like domain 6) with NLGN1 forming a heterotetramer, where one NLGN1 dimer interacts with one NRXN1 dimer. Also interacts (via laminin G-like domain 2 and/or laminin G-like domain 6) with NLGN2, NLGN3 and NLGN4L; interactions with NLGN1, NLGN2, NLGN3 and NLGN4L are calcium-dependent. Interacts (via cytoplasmic C-terminal region) with CASK (via the PDZ, SH3 and guanylate kinase-like domains). Interacts (via cytoplasmic C-terminus) with CASKIN1 and APBA1. Interacts (via laminin G-like domain 2) with NXPH1 and NXPH3. Alpha-type isoforms (neurexin-1-alpha) interact (via laminin G-like domain 2 and/or laminin G-like domain 6) with DAG1 (via alpha-dystroglycan chain). Interacts with LRRTM1, LRRTM2, LRRTM3 and LRRTM4. Interacts with SYT13 and SYTL1. Interacts with CBLN1, CBLN2 and, less avidly, with CBLN4. Interacts with CLSTN3. In terms of processing, O-glycosylated; contains heparan sulfate. Heparan sulfate attachment is required for synapse development by mediating interactions with neuroligins and LRRTM2.

It is found in the presynaptic cell membrane. In terms of biological role, cell surface protein involved in cell-cell-interactions, exocytosis of secretory granules and regulation of signal transmission. Function is isoform-specific. Alpha-type isoforms have a long N-terminus with six laminin G-like domains and play an important role in synaptic signal transmission. Alpha-type isoforms play a role in the regulation of calcium channel activity and Ca(2+)-triggered neurotransmitter release at synapses and at neuromuscular junctions. They play an important role in Ca(2+)-triggered exocytosis of secretory granules in pituitary gland. They may affect their functions at synapses and in endocrine cells via their interactions with proteins from the exocytotic machinery. Likewise, alpha-type isoforms play a role in regulating the activity of postsynaptic NMDA receptors, a subtype of glutamate-gated ion channels. Both alpha-type and beta-type isoforms may play a role in the formation or maintenance of synaptic junctions via their interactions (via the extracellular domains) with neuroligin family members, CBLN1 or CBLN2. In vitro, triggers the de novo formation of presynaptic structures. May be involved in specification of excitatory synapses. Alpha-type isoforms were first identified as receptors for alpha-latrotoxin from spider venom. This is Neurexin-1 (Nrxn1) from Mus musculus (Mouse).